A 256-amino-acid chain; its full sequence is PHD finger protein ALFIN-LIKE 4 (256 aa).

The disordered stretch occupies residues 149-195 (QSKTANGSSKNKSGSKPPKRPNSDSKPQKQVQAKYEEENGGRGNGGD). The segment covering 154–164 (NGSSKNKSGSK) has biased composition (low complexity). Residues 200–252 (ETICGACGEAYANGEFWICCDICETWFHGKCVRITPAKAEHIKHYKCPGCSNK) form a PHD-type zinc finger.

It belongs to the Alfin family. Interacts with H3K4me3 and to a lesser extent with H3K4me2.

It is found in the nucleus. Histone-binding component that specifically recognizes H3 tails trimethylated on 'Lys-4' (H3K4me3), which mark transcription start sites of virtually all active genes. This chain is PHD finger protein ALFIN-LIKE 4, found in Oryza sativa subsp. indica (Rice).